The following is a 620-amino-acid chain: Chaperone protein HscA homolog (620 aa).

It belongs to the heat shock protein 70 family.

Its function is as follows. Chaperone involved in the maturation of iron-sulfur cluster-containing proteins. Has a low intrinsic ATPase activity which is markedly stimulated by HscB. The protein is Chaperone protein HscA homolog of Herminiimonas arsenicoxydans.